The following is a 124-amino-acid chain: Fluoride-specific ion channel FluC (124 aa).

Transmembrane regions (helical) follow at residues 4 to 24 (LLLV…ISIF), 35 to 55 (FGTL…YALG), 60 to 80 (ISPE…TTFS), and 102 to 122 (VVLN…LVFS). Positions 74 and 77 each coordinate Na(+).

The protein belongs to the fluoride channel Fluc/FEX (TC 1.A.43) family.

Its subcellular location is the cell inner membrane. The enzyme catalyses fluoride(in) = fluoride(out). Na(+) is not transported, but it plays an essential structural role and its presence is essential for fluoride channel function. In terms of biological role, fluoride-specific ion channel. Important for reducing fluoride concentration in the cell, thus reducing its toxicity. This Shewanella oneidensis (strain ATCC 700550 / JCM 31522 / CIP 106686 / LMG 19005 / NCIMB 14063 / MR-1) protein is Fluoride-specific ion channel FluC.